Reading from the N-terminus, the 494-residue chain is Alpha-amylase A (494 aa).

Positions 1–18 (MFLAKSLVCLALLAVANA) are cleaved as a signal peptide. Pyrrolidone carboxylic acid is present on Gln19. Cys46 and Cys102 are disulfide-bonded. 3 residues coordinate Ca(2+): Asn116, Arg165, and Asp174. An intrachain disulfide couples Cys153 to Cys167. Arg202 contributes to the chloride binding site. Residue Asp204 is the Nucleophile of the active site. Residue His208 coordinates Ca(2+). Residue Glu241 is the Proton donor of the active site. Chloride-binding residues include Asn304 and Arg343. 2 disulfides stabilise this stretch: Cys376–Cys382 and Cys448–Cys460.

This sequence belongs to the glycosyl hydrolase 13 family. Monomer. Ca(2+) serves as cofactor. Chloride is required as a cofactor.

The enzyme catalyses Endohydrolysis of (1-&gt;4)-alpha-D-glucosidic linkages in polysaccharides containing three or more (1-&gt;4)-alpha-linked D-glucose units.. In Drosophila mauritiana (Fruit fly), this protein is Alpha-amylase A (Amy-d).